Reading from the N-terminus, the 322-residue chain is Transcription cofactor vestigial-like protein 2 (322 aa).

A compositionally biased stretch (low complexity) spans 42–61 (ASPGSSASGSSSFSNPTPAS). Disordered regions lie at residues 42–75 (ASPG…ERPP) and 248–322 (PGRL…PTLG). The segment covering 62 to 75 (VKEEEGSPEKERPP) has biased composition (basic and acidic residues). 2 stretches are compositionally biased toward low complexity: residues 248-258 (PGRLAPASAPA) and 270-283 (GEPA…PGGP). Positions 312 to 322 (SAPPALYPTLG) are enriched in pro residues.

This sequence belongs to the vestigial family. Interacts with TEFs. Binds to TEAD1/TEF1. In terms of tissue distribution, skeletal muscle specific.

It localises to the nucleus. Functionally, may act as a specific coactivator for the mammalian TEFs. May play a role in the development of skeletal muscles. In Mus musculus (Mouse), this protein is Transcription cofactor vestigial-like protein 2 (Vgll2).